The following is a 469-amino-acid chain: Probable monogalactosyldiacylglycerol synthase 2, chloroplastic (469 aa).

A chloroplast-targeting transit peptide spans 1-42; it reads MVISVATPRRSIRDAVLGGVLGAGGRQLYQPLRCAFYDGAAG.

This sequence belongs to the glycosyltransferase 28 family.

It localises to the plastid. The protein localises to the chloroplast membrane. It carries out the reaction a 1,2-diacyl-sn-glycerol + UDP-alpha-D-galactose = a 1,2-diacyl-3-O-(beta-D-galactosyl)-sn-glycerol + UDP + H(+). Involved in the synthesis of the major structural component of photosynthetic membranes. The polypeptide is Probable monogalactosyldiacylglycerol synthase 2, chloroplastic (MGD2) (Oryza sativa subsp. indica (Rice)).